Reading from the N-terminus, the 210-residue chain is Probable glutathione peroxidase 8 (210 aa).

The chain crosses the membrane as a helical span at residues 21 to 40 (VLLSMTVGVGCLLLLQTQLL).

This sequence belongs to the glutathione peroxidase family.

It is found in the membrane. It carries out the reaction 2 glutathione + H2O2 = glutathione disulfide + 2 H2O. This chain is Probable glutathione peroxidase 8 (gpx8), found in Tetraodon nigroviridis (Spotted green pufferfish).